The primary structure comprises 572 residues: E3 SUMO-protein ligase PIAS2 (572 aa).

In terms of domain architecture, SAP spans 11-45; it reads VSSFRVSELQVLLGFAGRNKSGRKHDLLMRALHLL. The LXXLL motif motif lies at 19-23; the sequence is LQVLL. Glycyl lysine isopeptide (Lys-Gly) (interchain with G-Cter in SUMO2) cross-links involve residues Lys-46 and Lys-249. One can recognise a PINIT domain in the interval 134–299; that stretch reads QPSPPIPPVH…SMSVYLVRQL (166 aa). The SP-RING-type zinc finger occupies 331 to 412; the sequence is PDSEIATTSL…FMEILNDCSD (82 aa). Residues Cys-362, His-364, Cys-385, and Cys-388 each coordinate Zn(2+). Glycyl lysine isopeptide (Lys-Gly) (interchain with G-Cter in SUMO2) cross-links involve residues Lys-430, Lys-435, Lys-443, and Lys-452. Residues 467 to 473 are SUMO1-binding; sequence IDVIDLT. Ser-476, Ser-477, and Ser-478 each carry phosphoserine. Positions 484–492 match the Nuclear localization signal motif; it reads PPAKRKCIF. Lys-489 is covalently cross-linked (Glycyl lysine isopeptide (Lys-Gly) (interchain with G-Cter in SUMO2)). Ser-499 bears the Phosphoserine mark. Residue Lys-502 forms a Glycyl lysine isopeptide (Lys-Gly) (interchain with G-Cter in SUMO2) linkage. The disordered stretch occupies residues 523 to 572; the sequence is AAIPPSLTDYSVPFHHTPVSSMSSDLPGEQRRNDINNEVQLGTSSDTVQQ. The segment covering 558–572 has biased composition (polar residues); sequence NNEVQLGTSSDTVQQ.

Belongs to the PIAS family. In terms of assembly, binds SUMO1 and UBE2I. Interacts with AXIN1, JUN, MDM2, PARK7, TP53 and TP73 isoform alpha, but not TP73 isoform beta. Interacts with STAT4 following IL12 and IFN-alpha stimulation of T-cells. Interacts also with GTF2I, GTF2IRD1, IKFZ1, DAB2 and MSX2, as well as with several steroid receptors, including ESR1, ESR2, NR3C1, PGR, AR, and with NCOA2. Sumoylation of a target protein seems to enhance the interaction. Binds to sumoylated ELK1. Binds DNA, such as CDKN1A promoter, in a sequence-specific manner. Interacts with PLAG1. Interacts with KLF8; the interaction results in SUMO ligation and repression of KLF8 transcriptional activity and of its cell cycle progression into G(1) phase. Interacts with IFIH1/MDA5. Interacts with PML. Interacts with PRDM1. Post-translationally, sumoylated. As to expression, mainly expressed in testis.

The protein localises to the nucleus speckle. Its subcellular location is the nucleus. The protein resides in the PML body. The protein operates within protein modification; protein sumoylation. Functionally, functions as an E3-type small ubiquitin-like modifier (SUMO) ligase, stabilizing the interaction between UBE2I and the substrate, and as a SUMO-tethering factor. Plays a crucial role as a transcriptional coregulation in various cellular pathways, including the STAT pathway, the p53 pathway and the steroid hormone signaling pathway. The effects of this transcriptional coregulation, transactivation or silencing may vary depending upon the biological context and PIAS2 isoform studied. However, it seems to be mostly involved in gene silencing. Binds to sumoylated ELK1 and enhances its transcriptional activity by preventing recruitment of HDAC2 by ELK1, thus reversing SUMO-mediated repression of ELK1 transactivation activity. Sumoylates PML at'Lys-65' and 'Lys-160'. This Rattus norvegicus (Rat) protein is E3 SUMO-protein ligase PIAS2 (Pias2).